We begin with the raw amino-acid sequence, 421 residues long: Anthranilate synthase component 1 (421 aa).

L-tryptophan-binding positions include Ser-31 and 207–209 (PYM). Position 242-243 (242-243 (GT)) interacts with chorismate. Mg(2+) is bound at residue Glu-269. Residues Tyr-357, Arg-377, 391–393 (GAG), and Gly-393 each bind chorismate. Glu-406 serves as a coordination point for Mg(2+).

It belongs to the anthranilate synthase component I family. As to quaternary structure, heterotetramer consisting of two non-identical subunits: a beta subunit (TrpG) and a large alpha subunit (TrpE). Mg(2+) serves as cofactor.

It carries out the reaction chorismate + L-glutamine = anthranilate + pyruvate + L-glutamate + H(+). It functions in the pathway amino-acid biosynthesis; L-tryptophan biosynthesis; L-tryptophan from chorismate: step 1/5. Cooperatively feedback inhibited by tryptophan. Part of a heterotetrameric complex that catalyzes the two-step biosynthesis of anthranilate, an intermediate in the biosynthesis of L-tryptophan. In the first step, the glutamine-binding beta subunit (TrpG) of anthranilate synthase (AS) provides the glutamine amidotransferase activity which generates ammonia as a substrate that, along with chorismate, is used in the second step, catalyzed by the large alpha subunit of AS (TrpE) to produce anthranilate. In the absence of TrpG, TrpE can synthesize anthranilate directly from chorismate and high concentrations of ammonia. The chain is Anthranilate synthase component 1 (trpE) from Saccharolobus solfataricus (strain ATCC 35092 / DSM 1617 / JCM 11322 / P2) (Sulfolobus solfataricus).